The chain runs to 305 residues: Sulfate adenylyltransferase subunit 2 (305 aa).

It belongs to the PAPS reductase family. CysD subfamily. Heterodimer composed of CysD, the smaller subunit, and CysN.

It catalyses the reaction sulfate + ATP + H(+) = adenosine 5'-phosphosulfate + diphosphate. It functions in the pathway sulfur metabolism; hydrogen sulfide biosynthesis; sulfite from sulfate: step 1/3. With CysN forms the ATP sulfurylase (ATPS) that catalyzes the adenylation of sulfate producing adenosine 5'-phosphosulfate (APS) and diphosphate, the first enzymatic step in sulfur assimilation pathway. APS synthesis involves the formation of a high-energy phosphoric-sulfuric acid anhydride bond driven by GTP hydrolysis by CysN coupled to ATP hydrolysis by CysD. In Pseudomonas savastanoi pv. phaseolicola (strain 1448A / Race 6) (Pseudomonas syringae pv. phaseolicola (strain 1448A / Race 6)), this protein is Sulfate adenylyltransferase subunit 2.